A 194-amino-acid polypeptide reads, in one-letter code: FMN-dependent NADH:quinone oxidoreductase (194 aa).

FMN contacts are provided by residues Ser-10 and 90 to 93 (MYNL).

Belongs to the azoreductase type 1 family. In terms of assembly, homodimer. FMN is required as a cofactor.

It catalyses the reaction 2 a quinone + NADH + H(+) = 2 a 1,4-benzosemiquinone + NAD(+). The catalysed reaction is N,N-dimethyl-1,4-phenylenediamine + anthranilate + 2 NAD(+) = 2-(4-dimethylaminophenyl)diazenylbenzoate + 2 NADH + 2 H(+). Functionally, quinone reductase that provides resistance to thiol-specific stress caused by electrophilic quinones. In terms of biological role, also exhibits azoreductase activity. Catalyzes the reductive cleavage of the azo bond in aromatic azo compounds to the corresponding amines. The polypeptide is FMN-dependent NADH:quinone oxidoreductase (Haemophilus influenzae (strain 86-028NP)).